The following is a 1217-amino-acid chain: ATP-dependent helicase/nuclease subunit A (1217 aa).

In terms of domain architecture, UvrD-like helicase ATP-binding spans 10 to 475 (VIWTDAQWQS…MDLSQNFRSR (466 aa)). Position 31 to 38 (31 to 38 (AAAGSGKT)) interacts with ATP. A UvrD-like helicase C-terminal domain is found at 491–786 (DEQVGEVNYD…RMMTIHSSKG (296 aa)).

Belongs to the helicase family. AddA subfamily. In terms of assembly, heterodimer of AddA and AddB/RexB. Mg(2+) is required as a cofactor.

The enzyme catalyses Couples ATP hydrolysis with the unwinding of duplex DNA by translocating in the 3'-5' direction.. It carries out the reaction ATP + H2O = ADP + phosphate + H(+). The heterodimer acts as both an ATP-dependent DNA helicase and an ATP-dependent, dual-direction single-stranded exonuclease. Recognizes the chi site generating a DNA molecule suitable for the initiation of homologous recombination. The AddA nuclease domain is required for chi fragment generation; this subunit has the helicase and 3' -&gt; 5' nuclease activities. The chain is ATP-dependent helicase/nuclease subunit A from Staphylococcus aureus (strain bovine RF122 / ET3-1).